Here is a 220-residue protein sequence, read N- to C-terminus: Deoxyribose-phosphate aldolase (220 aa).

Residue aspartate 89 is the Proton donor/acceptor of the active site. Lysine 151 (schiff-base intermediate with acetaldehyde) is an active-site residue. Lysine 180 functions as the Proton donor/acceptor in the catalytic mechanism.

Belongs to the DeoC/FbaB aldolase family. DeoC type 1 subfamily. Homotetramer, in solution and in the crystal structure.

The protein localises to the cytoplasm. It carries out the reaction 2-deoxy-D-ribose 5-phosphate = D-glyceraldehyde 3-phosphate + acetaldehyde. It participates in carbohydrate degradation; 2-deoxy-D-ribose 1-phosphate degradation; D-glyceraldehyde 3-phosphate and acetaldehyde from 2-deoxy-alpha-D-ribose 1-phosphate: step 2/2. Catalyzes a reversible aldol reaction between acetaldehyde and D-glyceraldehyde 3-phosphate to generate 2-deoxy-D-ribose 5-phosphate. This chain is Deoxyribose-phosphate aldolase, found in Thermus thermophilus (strain ATCC 27634 / DSM 579 / HB8).